The primary structure comprises 335 residues: Mitochondrial thiamine diphosphate carrier 1 (335 aa).

The next 6 membrane-spanning stretches (helical) occupy residues 13-29 (KRAV…GAIS), 88-105 (VPAL…FAVL), 127-150 (YLSY…FDLL), 182-199 (LYAG…YAGL), 231-247 (SLSS…SGTV), and 304-323 (GIVP…FVAY). Solcar repeat units lie at residues 13 to 111 (KRAV…VKSF), 124 to 210 (LSPY…FKRW), and 232 to 329 (LSSF…ASDW).

This sequence belongs to the mitochondrial carrier (TC 2.A.29) family.

The protein localises to the mitochondrion inner membrane. Functionally, mitochondrial transporter that mediates uptake of thiamine diphosphate (ThDP) into mitochondria. This chain is Mitochondrial thiamine diphosphate carrier 1, found in Arabidopsis thaliana (Mouse-ear cress).